The chain runs to 109 residues: Iron-sulfur cluster assembly protein CyaY (109 aa).

This sequence belongs to the frataxin family.

Functionally, involved in iron-sulfur (Fe-S) cluster assembly. May act as a regulator of Fe-S biogenesis. The sequence is that of Iron-sulfur cluster assembly protein CyaY from Bordetella bronchiseptica (strain ATCC BAA-588 / NCTC 13252 / RB50) (Alcaligenes bronchisepticus).